The primary structure comprises 208 residues: Guanylate kinase (208 aa).

In terms of domain architecture, Guanylate kinase-like spans 4–185 (GNLYILSAPS…TLKDLQSILQ (182 aa)). 11 to 18 (APSGAGKS) contributes to the ATP binding site.

This sequence belongs to the guanylate kinase family.

It localises to the cytoplasm. The enzyme catalyses GMP + ATP = GDP + ADP. In terms of biological role, essential for recycling GMP and indirectly, cGMP. In Haemophilus influenzae (strain 86-028NP), this protein is Guanylate kinase.